Reading from the N-terminus, the 367-residue chain is CCCH-type zinc finger protein moe-3 (367 aa).

Positions 1-15 are enriched in basic and acidic residues; the sequence is MSKVKGDLEKSDKRP. A disordered region spans residues 1-57; the sequence is MSKVKGDLEKSDKRPPSSMSTGSADSGVFSSGVHASSPSHSQGSSSQSGPPSPTTQL. The span at 30–49 shows a compositional bias: low complexity; that stretch reads SSGVHASSPSHSQGSSSQSG. Residues 63–92 adopt a coiled-coil conformation; it reads ETANLIAVNEQLRKEIAENKQIQTNQMRAL. The tract at residues 107-126 is disordered; that stretch reads SISPHHGFPQRPPRGERRMQ. C3H1-type zinc fingers lie at residues 130-158 and 172-200; these read SYKTVICQAWLESKTCTFAENCRFAHGEE and KYKTKLCDKYTTTGLCPYGKRCLFIHPDN. The disordered stretch occupies residues 235–268; the sequence is NTRNSYNQQPPPMGGLEMQSSPMKSSSDSSHMRS. A compositionally biased stretch (low complexity) spans 252 to 268; that stretch reads MQSSPMKSSSDSSHMRS.

Exclusively expressed in the hermaphrodite gonad. Weakly distributed throughout gonadal oocytes from the mitotic stage to the developing diakinesis stage, with expression restricted to the distal region of the gonad.

Zinc-finger protein that may play a role in oocyte maturation and fertility. The chain is CCCH-type zinc finger protein moe-3 from Caenorhabditis elegans.